Consider the following 760-residue polypeptide: ATP-dependent RNA helicase dbp7 (760 aa).

Positions 23–34 (KLKGGTWRDRLS) are enriched in basic and acidic residues. The segment at 23 to 129 (KLKGGTWRDR…EPVEDAKPTN (107 aa)) is disordered. Basic residues predominate over residues 38 to 47 (IAQHRTKNPR). Positions 58 to 72 (KGPQNPNRIQVSSSR) are enriched in polar residues. Residues 77-94 (QKTDADGDNEKSRHDNKQ) are compositionally biased toward basic and acidic residues. Polar residues predominate over residues 99–110 (FVSSLFSKNPTP). The Q motif signature appears at 137-166 (DTFTNLGLSPSLAAHLLTKLELKAPTGIQK). The region spanning 170-372 (SQLLKEDSDA…EISLKDAVHI (203 aa)) is the Helicase ATP-binding domain. An ATP-binding site is contributed by 183 to 190 (AETGSGKT). The DEAD box signature appears at 308–311 (DEGD). In terms of domain architecture, Helicase C-terminal spans 396–609 (QLKQSYAIVA…LTRTTAEDIL (214 aa)). 2 disordered regions span residues 453–490 (YRDE…AVAF) and 692–760 (SKIN…FNLA). Over residues 456–470 (ESEDEDEEKEDDDED) the composition is skewed to acidic residues. The segment covering 701–716 (PGDKEAKKDYKAERNT) has biased composition (basic and acidic residues). Positions 731–740 (QPSNDATSAA) are enriched in polar residues.

This sequence belongs to the DEAD box helicase family. DDX31/DBP7 subfamily.

It localises to the nucleus. The protein localises to the nucleolus. It carries out the reaction ATP + H2O = ADP + phosphate + H(+). In terms of biological role, ATP-binding RNA helicase involved in the biogenesis of 60S ribosomal subunits and is required for the normal formation of 25S and 5.8S rRNAs. This is ATP-dependent RNA helicase dbp7 (dbp7) from Aspergillus oryzae (strain ATCC 42149 / RIB 40) (Yellow koji mold).